Consider the following 833-residue polypeptide: Leucine--tRNA ligase (833 aa).

The 'HIGH' region motif lies at 41–52 (PYPSGAGLHVGH). Positions 610–614 (KMSKS) match the 'KMSKS' region motif. K613 is an ATP binding site.

This sequence belongs to the class-I aminoacyl-tRNA synthetase family.

The protein resides in the cytoplasm. It carries out the reaction tRNA(Leu) + L-leucine + ATP = L-leucyl-tRNA(Leu) + AMP + diphosphate. In Streptococcus suis (strain 05ZYH33), this protein is Leucine--tRNA ligase.